The following is a 456-amino-acid chain: Bifunctional protein GlmU (456 aa).

A pyrophosphorylase region spans residues 1-227 (MKLRVVILAA…AQEVEGANNR (227 aa)). Residues 8-11 (LAAG), Lys22, Gln73, 78-79 (GT), 100-102 (YGD), Gly137, Glu152, Asn167, and Asn225 each bind UDP-N-acetyl-alpha-D-glucosamine. Asp102 contributes to the Mg(2+) binding site. A Mg(2+)-binding site is contributed by Asn225. The interval 228 to 248 (QQLASLERALQQRQAEELMTQ) is linker. The segment at 249–456 (GVTLIDPARF…WQRPQSKKGT (208 aa)) is N-acetyltransferase. UDP-N-acetyl-alpha-D-glucosamine contacts are provided by Arg331 and Lys349. The active-site Proton acceptor is His361. UDP-N-acetyl-alpha-D-glucosamine is bound by residues Tyr364 and Asn375. Residues Ala378, 384–385 (NY), Ser403, Ala421, and Arg438 contribute to the acetyl-CoA site.

The protein in the N-terminal section; belongs to the N-acetylglucosamine-1-phosphate uridyltransferase family. This sequence in the C-terminal section; belongs to the transferase hexapeptide repeat family. In terms of assembly, homotrimer. Mg(2+) serves as cofactor.

The protein resides in the cytoplasm. It catalyses the reaction alpha-D-glucosamine 1-phosphate + acetyl-CoA = N-acetyl-alpha-D-glucosamine 1-phosphate + CoA + H(+). It carries out the reaction N-acetyl-alpha-D-glucosamine 1-phosphate + UTP + H(+) = UDP-N-acetyl-alpha-D-glucosamine + diphosphate. The protein operates within nucleotide-sugar biosynthesis; UDP-N-acetyl-alpha-D-glucosamine biosynthesis; N-acetyl-alpha-D-glucosamine 1-phosphate from alpha-D-glucosamine 6-phosphate (route II): step 2/2. It functions in the pathway nucleotide-sugar biosynthesis; UDP-N-acetyl-alpha-D-glucosamine biosynthesis; UDP-N-acetyl-alpha-D-glucosamine from N-acetyl-alpha-D-glucosamine 1-phosphate: step 1/1. Its pathway is bacterial outer membrane biogenesis; LPS lipid A biosynthesis. Its function is as follows. Catalyzes the last two sequential reactions in the de novo biosynthetic pathway for UDP-N-acetylglucosamine (UDP-GlcNAc). The C-terminal domain catalyzes the transfer of acetyl group from acetyl coenzyme A to glucosamine-1-phosphate (GlcN-1-P) to produce N-acetylglucosamine-1-phosphate (GlcNAc-1-P), which is converted into UDP-GlcNAc by the transfer of uridine 5-monophosphate (from uridine 5-triphosphate), a reaction catalyzed by the N-terminal domain. The protein is Bifunctional protein GlmU of Idiomarina loihiensis (strain ATCC BAA-735 / DSM 15497 / L2-TR).